The following is a 268-amino-acid chain: 5'-nucleotidase SurE (268 aa).

The a divalent metal cation site is built by Asp8, Asp9, Ser40, and Asn98.

It belongs to the SurE nucleotidase family. It depends on a divalent metal cation as a cofactor.

It is found in the cytoplasm. It catalyses the reaction a ribonucleoside 5'-phosphate + H2O = a ribonucleoside + phosphate. In terms of biological role, nucleotidase that shows phosphatase activity on nucleoside 5'-monophosphates. The protein is 5'-nucleotidase SurE of Trichodesmium erythraeum (strain IMS101).